Consider the following 216-residue polypeptide: Adenylate kinase (216 aa).

11-16 contacts ATP; the sequence is GSGKGT. The segment at 31-60 is NMP; the sequence is ATGDLFRKAIERGDELGDTVKSYMERGELV. Residues Thr32, Arg37, 58-60, 86-89, and Gln93 each bind AMP; these read ELV and GFPR. The interval 127-163 is LID; that stretch reads GRWVCRSCQSPYQCGCAEVAEGKCSRCQGELYQRPDD. Arg128 is a binding site for ATP. Zn(2+) contacts are provided by Cys131, Cys134, Cys150, and Cys153. 2 residues coordinate AMP: Arg160 and Arg171. Ala199 contacts ATP.

Belongs to the adenylate kinase family. As to quaternary structure, monomer.

Its subcellular location is the cytoplasm. The catalysed reaction is AMP + ATP = 2 ADP. It functions in the pathway purine metabolism; AMP biosynthesis via salvage pathway; AMP from ADP: step 1/1. Its function is as follows. Catalyzes the reversible transfer of the terminal phosphate group between ATP and AMP. Plays an important role in cellular energy homeostasis and in adenine nucleotide metabolism. This Dehalococcoides mccartyi (strain ATCC BAA-2266 / KCTC 15142 / 195) (Dehalococcoides ethenogenes (strain 195)) protein is Adenylate kinase.